A 614-amino-acid chain; its full sequence is Probable LRR receptor-like serine/threonine-protein kinase At5g63710 (614 aa).

Positions 1–50 (MAHSGNGESFHDPLRGFIQRNCFRWNNQKLILQCFMALAFVGITSSTTQP) are cleaved as a signal peptide. Topologically, residues 51–224 (DIEGGALLQL…VTSSKKKLRD (174 aa)) are extracellular. N-linked (GlcNAc...) asparagine glycans are attached at residues N65, N125, N146, and N175. LRR repeat units lie at residues 115 to 139 (LKFLVTLELQNNSLSGALPDSLGNM), 141 to 163 (NLQTLNLSVNSFSGSIPASWSQL), and 164 to 187 (SNLKHLDLSSNNLTGSIPTQFFSI). Residues 225–245 (ITLTASCVASIILFLGAMVMY) form a helical membrane-spanning segment. Over 246-613 (HHHRVRRTKY…DQESIRLSTA (368 aa)) the chain is Cytoplasmic. Position 286 is a phosphothreonine (T286). One can recognise a Protein kinase domain in the interval 289–573 (FNESNLIGQG…GTGGLAEKWT (285 aa)). 295 to 303 (IGQGGFGKV) is a binding site for ATP. Phosphothreonine is present on T312. K317 serves as a coordination point for ATP. S370 bears the Phosphoserine mark. T389 carries the phosphothreonine modification. The active-site Proton acceptor is the D416. 3 positions are modified to phosphothreonine: T449, T450, and T455. Y463 is subject to Phosphotyrosine. T466 carries the post-translational modification Phosphothreonine. S470 bears the Phosphoserine mark. T545 carries the post-translational modification Phosphothreonine.

This sequence belongs to the protein kinase superfamily. Ser/Thr protein kinase family.

Its subcellular location is the cell membrane. The enzyme catalyses L-seryl-[protein] + ATP = O-phospho-L-seryl-[protein] + ADP + H(+). It carries out the reaction L-threonyl-[protein] + ATP = O-phospho-L-threonyl-[protein] + ADP + H(+). In Arabidopsis thaliana (Mouse-ear cress), this protein is Probable LRR receptor-like serine/threonine-protein kinase At5g63710.